The following is a 180-amino-acid chain: uncharacterized protein (180 aa).

The region spanning 35-163 (LRHRATYIVV…TPDSLKALAL (129 aa)) is the Nudix hydrolase domain. The Nudix box signature appears at 72–94 (GGVVQADEQLLESARREAEEELG). Positions 88 and 92 each coordinate Mg(2+).

Belongs to the Nudix hydrolase family. The cofactor is Mg(2+).

This is an uncharacterized protein from Escherichia coli O157:H7.